The chain runs to 269 residues: Sushi domain-containing protein 3 (269 aa).

The interval 1-23 is disordered; it reads MRRTSATLRGRARPRWRAGNTTP. Residues 1-103 are Extracellular-facing; the sequence is MRRTSATLRG…VPPHETFGFK (103 aa). Positions 30 to 93 constitute a Sushi domain; sequence GTCAQLHPPP…WSSGSPVCKA (64 aa). 2 disulfide bridges follow: Cys-32-Cys-75 and Cys-61-Cys-91. The chain crosses the membrane as a helical span at residues 104–124; the sequence is VAVIASIVSCAIILLMSMAFL. Residues 125–269 are Cytoplasmic-facing; it reads TCCLLKCVQK…PGRPKVYLPG (145 aa). The segment at 171 to 237 is disordered; sequence NNSSSVGGGN…RMGTPGPGGC (67 aa). The span at 176 to 190 shows a compositional bias: gly residues; the sequence is VGGGNGGPSGGGGKP.

The protein resides in the cell membrane. The polypeptide is Sushi domain-containing protein 3 (Susd3) (Mus musculus (Mouse)).